A 160-amino-acid chain; its full sequence is SsrA-binding protein (160 aa).

It belongs to the SmpB family.

The protein localises to the cytoplasm. Its function is as follows. Required for rescue of stalled ribosomes mediated by trans-translation. Binds to transfer-messenger RNA (tmRNA), required for stable association of tmRNA with ribosomes. tmRNA and SmpB together mimic tRNA shape, replacing the anticodon stem-loop with SmpB. tmRNA is encoded by the ssrA gene; the 2 termini fold to resemble tRNA(Ala) and it encodes a 'tag peptide', a short internal open reading frame. During trans-translation Ala-aminoacylated tmRNA acts like a tRNA, entering the A-site of stalled ribosomes, displacing the stalled mRNA. The ribosome then switches to translate the ORF on the tmRNA; the nascent peptide is terminated with the 'tag peptide' encoded by the tmRNA and targeted for degradation. The ribosome is freed to recommence translation, which seems to be the essential function of trans-translation. The protein is SsrA-binding protein of Pectobacterium atrosepticum (strain SCRI 1043 / ATCC BAA-672) (Erwinia carotovora subsp. atroseptica).